The primary structure comprises 468 residues: Glycosyl hydrolase family 109 protein (468 aa).

A signal peptide spans 1-19; sequence MVYKVFLSLCIGLALSASA. NAD(+) is bound by residues 67–68, aspartate 89, 138–141, 158–159, and asparagine 187; these read MR, WKTH, and EV. Substrate is bound by residues tyrosine 216, arginine 232, 244-247, and tyrosine 322; that span reads YATH. Tyrosine 244 serves as a coordination point for NAD(+).

The protein belongs to the Gfo/Idh/MocA family. Glycosyl hydrolase 109 subfamily. It depends on NAD(+) as a cofactor.

Functionally, glycosidase. The polypeptide is Glycosyl hydrolase family 109 protein (Porphyromonas gingivalis (strain ATCC BAA-308 / W83)).